We begin with the raw amino-acid sequence, 180 residues long: FMN reductase (NADH) RutF (180 aa).

It belongs to the non-flavoprotein flavin reductase family. RutF subfamily.

It catalyses the reaction FMNH2 + NAD(+) = FMN + NADH + 2 H(+). Functionally, catalyzes the reduction of FMN to FMNH2 which is used to reduce pyrimidine by RutA via the Rut pathway. In Bradyrhizobium diazoefficiens (strain JCM 10833 / BCRC 13528 / IAM 13628 / NBRC 14792 / USDA 110), this protein is FMN reductase (NADH) RutF.